A 200-amino-acid chain; its full sequence is Methyl-coenzyme M reductase I operon protein C (200 aa).

In terms of assembly, MCR is composed of three subunits: alpha, beta, and gamma. The function of proteins C and D is not known.

This is Methyl-coenzyme M reductase I operon protein C (mcrC) from Methanocaldococcus jannaschii (strain ATCC 43067 / DSM 2661 / JAL-1 / JCM 10045 / NBRC 100440) (Methanococcus jannaschii).